Reading from the N-terminus, the 336-residue chain is MSTPVILALTAGEPAGIGPELCLQLATGSRDAGLVVIASGELLRDRASQLGLQIELHDWQPGVAAATRAGHLSVRHVEGCGSTVAGRLDKANSQYVLDTLTIAARGCLNGDFDGMVTAPVHKGVINEAGIVFSGHTEFLQELCGVERVVMMLATEELRVALVTTHLPLKDVSAAITPDRLTQVTRILNADLKAFFGIDQPRILVAGLNPHAGEGGHLGREEIEVIEPTLEQLRAEGIQLTGPLPADTLFTPHWLDNADAVLAMYHDQGLPVLKFQGFGRAVNITLGLPIVRTSVDHGTALDLAGTGKADAGSLHTAIRVGEQMAQCRKATGAGELS.

Substrate contacts are provided by histidine 135 and threonine 136. A divalent metal cation contacts are provided by histidine 165, histidine 210, and histidine 265. Residues lysine 273, asparagine 282, and arginine 291 each contribute to the substrate site.

The protein belongs to the PdxA family. Homodimer. Zn(2+) is required as a cofactor. It depends on Mg(2+) as a cofactor. Requires Co(2+) as cofactor.

The protein resides in the cytoplasm. It catalyses the reaction 4-(phosphooxy)-L-threonine + NAD(+) = 3-amino-2-oxopropyl phosphate + CO2 + NADH. It participates in cofactor biosynthesis; pyridoxine 5'-phosphate biosynthesis; pyridoxine 5'-phosphate from D-erythrose 4-phosphate: step 4/5. Catalyzes the NAD(P)-dependent oxidation of 4-(phosphooxy)-L-threonine (HTP) into 2-amino-3-oxo-4-(phosphooxy)butyric acid which spontaneously decarboxylates to form 3-amino-2-oxopropyl phosphate (AHAP). The chain is 4-hydroxythreonine-4-phosphate dehydrogenase from Marinobacter nauticus (strain ATCC 700491 / DSM 11845 / VT8) (Marinobacter aquaeolei).